The primary structure comprises 87 residues: UPF0367 protein Pro_0144 (87 aa).

The protein belongs to the UPF0367 family.

The chain is UPF0367 protein Pro_0144 from Prochlorococcus marinus (strain SARG / CCMP1375 / SS120).